Consider the following 476-residue polypeptide: 4-(hydroxymethyl)benzenesulfonate dehydrogenase TsaD1 (476 aa).

Residues 154-155, 178-181, and 230-231 each bind NAD(+); these read WN, KAAE, and GS. Glutamate 252 serves as the catalytic Proton acceptor. Leucine 253 contributes to the NAD(+) binding site. The Nucleophile role is filled by cysteine 286. Position 380 (glutamate 380) interacts with NAD(+).

This sequence belongs to the aldehyde dehydrogenase family. Homodimer.

It catalyses the reaction 4-(hydroxymethyl)benzenesulfonate + NAD(+) = 4-formylbenzenesulfonate + NADH + H(+). Functionally, involved in the toluene-4-sulfonate degradation pathway. Does not discriminate between the sulfonate and the carboxyl substituents and can also be involved in the p-toluenecarboxylate degradation pathway. This chain is 4-(hydroxymethyl)benzenesulfonate dehydrogenase TsaD1 (tsaD1), found in Comamonas testosteroni (Pseudomonas testosteroni).